Consider the following 84-residue polypeptide: Large ribosomal subunit protein bL31B (84 aa).

This sequence belongs to the bacterial ribosomal protein bL31 family. Type B subfamily. As to quaternary structure, part of the 50S ribosomal subunit.

Its function is as follows. Binds the 23S rRNA. In Rhodococcus jostii (strain RHA1), this protein is Large ribosomal subunit protein bL31B.